Reading from the N-terminus, the 436-residue chain is Trigger factor (436 aa).

A PPIase FKBP-type domain is found at 161–255 (DDVAIIDFKT…VKEVREKQLP (95 aa)).

Belongs to the FKBP-type PPIase family. Tig subfamily.

It is found in the cytoplasm. It carries out the reaction [protein]-peptidylproline (omega=180) = [protein]-peptidylproline (omega=0). Involved in protein export. Acts as a chaperone by maintaining the newly synthesized protein in an open conformation. Functions as a peptidyl-prolyl cis-trans isomerase. The protein is Trigger factor of Akkermansia muciniphila (strain ATCC BAA-835 / DSM 22959 / JCM 33894 / BCRC 81048 / CCUG 64013 / CIP 107961 / Muc).